The sequence spans 290 residues: Thioredoxin-like protein 1 (290 aa).

The region spanning 24–104 is the Thioredoxin domain; that stretch reads VDCYADWCGP…PQALKEKVAL (81 aa). Cys-31 and Cys-34 are joined by a disulfide. In terms of domain architecture, PITH spans 118–290; sequence SSSAPVKGFA…SKGKLQKVEA (173 aa).

Its subcellular location is the cytoplasm. The protein localises to the nucleus. In terms of biological role, has a role in cellular detoxification of alkyl hydroperoxide. This is Thioredoxin-like protein 1 (txl1) from Schizosaccharomyces pombe (strain 972 / ATCC 24843) (Fission yeast).